Reading from the N-terminus, the 29-residue chain is Brevinin-2Td (29 aa).

A disulfide bridge links Cys23 with Cys29.

Belongs to the frog skin active peptide (FSAP) family. Brevinin subfamily. In terms of tissue distribution, expressed by the skin glands.

Its subcellular location is the secreted. In terms of biological role, antibacterial activity against representative Gram-negative and Gram-positive bacteria. The sequence is that of Brevinin-2Td from Rana temporaria (European common frog).